The following is a 101-amino-acid chain: Small ribosomal subunit protein bS16 (101 aa).

Belongs to the bacterial ribosomal protein bS16 family.

This Ureaplasma parvum serovar 3 (strain ATCC 700970) protein is Small ribosomal subunit protein bS16.